The following is a 114-amino-acid chain: Large ribosomal subunit protein bL19 (114 aa).

This sequence belongs to the bacterial ribosomal protein bL19 family.

Its function is as follows. This protein is located at the 30S-50S ribosomal subunit interface and may play a role in the structure and function of the aminoacyl-tRNA binding site. This Lactococcus lactis subsp. lactis (strain IL1403) (Streptococcus lactis) protein is Large ribosomal subunit protein bL19.